Here is a 28-residue protein sequence, read N- to C-terminus: Small spore coat assembly protein A (28 aa).

A helical membrane pass occupies residues 8 to 28 (GFALLVVLFILLIIVGAAYIY).

This sequence belongs to the SscA family.

The protein localises to the spore coat. It is found in the membrane. Its function is as follows. Spore protein involved in the assembly of several components of the spore coat, including CotB, CotG and CotH, and in spore germination. The polypeptide is Small spore coat assembly protein A (Bacillus subtilis (strain 168)).